A 358-amino-acid chain; its full sequence is Ion-translocating oxidoreductase complex subunit D (358 aa).

Helical transmembrane passes span 16-36 (VSRTMLTVVAALTPATLFGLW), 38-58 (FGWPAIFLFLTTVVSAWVFEV), 68-90 (IRPFATDGSAILSGWLVAMTLPP), 128-148 (AMLVVALPVQMTTWIAPVGLL), 206-226 (FVPGSLGETSTVLLALGGLLL), 236-256 (IPLAVLGTLVTLSAICSFLAP), and 286-306 (PVTTAGKWVYGIGIGTLVFVI).

Belongs to the NqrB/RnfD family. As to quaternary structure, the complex is composed of six subunits: RnfA, RnfB, RnfC, RnfD, RnfE and RnfG. The cofactor is FMN.

It is found in the cellular chromatophore membrane. Functionally, part of a membrane-bound complex that couples electron transfer with translocation of ions across the membrane. Required for nitrogen fixation. Involved in electron transfer to nitrogenase. The chain is Ion-translocating oxidoreductase complex subunit D from Rhodobacter capsulatus (Rhodopseudomonas capsulata).